Reading from the N-terminus, the 420-residue chain is Probable glucuronosyltransferase Os04g0398600 (420 aa).

Residues 1-4 (MGSR) are Cytoplasmic-facing. Residues 5-25 (TVGWWLLAAAVVLAAAAADSG) traverse the membrane as a helical; Signal-anchor for type II membrane protein segment. At 26–420 (EAERAAEQHS…AGPVGDLKAW (395 aa)) the chain is on the lumenal side. Residues N147 and N408 are each glycosylated (N-linked (GlcNAc...) asparagine).

Belongs to the glycosyltransferase 47 family.

The protein localises to the golgi apparatus membrane. Involved in the synthesis of glucuronoxylan hemicellulose in secondary cell walls. The polypeptide is Probable glucuronosyltransferase Os04g0398600 (Oryza sativa subsp. japonica (Rice)).